A 356-amino-acid chain; its full sequence is MDERRTPSPCSSRPSSPRTPPCEMFGPVGIEAVLDQLRIKAMKTGFEFNIMVVGQSGLGKSTMVNTLFKSKVWQSPAPNLDVPMPQTLELHSVTHVIEEKGLKLKLTVTDTPGFGDQINNDKCWDPILSYINQQYEQYLQEELLITRQRHIPDTRVHCCVYFVPPTGHCLRPLDIEFLRRLCRTVNVVPVIARADSLTIEERDAFRSRIQQNLKNHCIDVYPQQCFDEDINDRLLNSKIREQIPFAVVGADREHIVNGRCVLGRKTKWGIIEVENMAHCEFLLLRDLLIRSHLQDLKDITHNVHYENYRVLRLNESHVLPRGPGWVNLAPASPGQLMAPGPEKVRKRSKDPRDDEC.

Positions 1–23 (MDERRTPSPCSSRPSSPRTPPCE) are disordered. The span at 7 to 16 (PSPCSSRPSS) shows a compositional bias: low complexity. Residues 44–315 (TGFEFNIMVV…ENYRVLRLNE (272 aa)) form the Septin-type G domain. The interaction with SEPTIN7 stretch occupies residues 44-317 (TGFEFNIMVV…YRVLRLNESH (274 aa)). The segment at 54–61 (GQSGLGKS) is G1 motif. GTP contacts are provided by residues 54–61 (GQSGLGKS), Thr87, Gly113, 193–201 (RADSLTIEE), Gly249, and Arg264. The segment at 110 to 113 (DTPG) is G3 motif. The tract at residues 192 to 195 (ARAD) is G4 motif. The self-association (via N-terminus) to polymerize octameric septin 12-7-6-2/4-2/4-6-7-12 filaments stretch occupies residues 256 to 356 (VNGRCVLGRK…RSKDPRDDEC (101 aa)). Positions 330–356 (PASPGQLMAPGPEKVRKRSKDPRDDEC) are disordered.

Belongs to the TRAFAC class TrmE-Era-EngA-EngB-Septin-like GTPase superfamily. Septin GTPase family. As to quaternary structure, septins polymerize into heterooligomeric protein complexes that form filaments, and can associate with cellular membranes, actin filaments and microtubules. GTPase activity is required for filament formation. Interacts with SEPTIN6 and SEPTIN11. Self-associates. Component of a octameric complex consisting of SEPTIN12, SEPTIN7, SEPTIN6 and SEPTIN2 or SEPTIN4 in the order 12-7-6-2-2-6-7-12 or 12-7-6-4-4-6-7-12 and located in the sperm annulus; the octamer polymerizes into filaments via the SEPTIN12 N- and C-termini; the SEPTIN12:SEPTIN7 association is mediated by the GTP-binding domains. Interacts with SPAG4 and LMNB1. Associates with alpha- and beta-tubulins. Predominantly expressed in testis and epididymis. Component of the sperm tail annulus (at protein level).

The protein localises to the cytoplasm. Its subcellular location is the cytoskeleton. The protein resides in the spindle. It localises to the cell projection. It is found in the cilium. The protein localises to the flagellum. In terms of biological role, filament-forming cytoskeletal GTPase. May play a role in cytokinesis (Potential). Involved in spermatogenesis. Involved in the morphogenesis of sperm heads and the elongation of sperm tails probably implicating the association with alpha- and beta-tubulins. Forms a filamentous structure with SEPTIN7, SEPTIN6, SEPTIN2 and probably SEPTIN4 at the sperm annulus which is required for the structural integrity and motility of the sperm tail during postmeiotic differentiation. The protein is Septin-12 of Rattus norvegicus (Rat).